The sequence spans 431 residues: UDP-N-acetylmuramate--L-alanine ligase (431 aa).

Residue G108–S114 coordinates ATP.

This sequence belongs to the MurCDEF family.

Its subcellular location is the cytoplasm. The enzyme catalyses UDP-N-acetyl-alpha-D-muramate + L-alanine + ATP = UDP-N-acetyl-alpha-D-muramoyl-L-alanine + ADP + phosphate + H(+). It participates in cell wall biogenesis; peptidoglycan biosynthesis. Functionally, cell wall formation. The sequence is that of UDP-N-acetylmuramate--L-alanine ligase from Exiguobacterium sibiricum (strain DSM 17290 / CCUG 55495 / CIP 109462 / JCM 13490 / 255-15).